The primary structure comprises 165 residues: MNDNISPIHSPYKAPNTISLVAGKGDTNNPLNAFDMALLDAGICNVNLIKISSIMPPKAEVVPLPDIPMGSLVPTAYGYKTSDIKGETVSAAVSVAIPKDKELCGLIMEYSAIGGKKETEDTVREMAKTGFEMRGWEIDKIISLASECTVENIGCAFAAVALWYK.

Position 53 is a pyruvic acid (Ser) (S53).

This sequence belongs to the PdaD family. Requires pyruvate as cofactor.

It carries out the reaction L-arginine + H(+) = agmatine + CO2. The sequence is that of Pyruvoyl-dependent arginine decarboxylase from Methanococcus aeolicus (strain ATCC BAA-1280 / DSM 17508 / OCM 812 / Nankai-3).